The chain runs to 555 residues: Sulfite reductase [ferredoxin] (555 aa).

The interval 1–22 (MTTARPAKARNEGQWALGHREP) is disordered. The 3'-(S-cysteinyl)-tyrosine (Tyr-Cys) cross-link spans 69 to 161 (YTQREQGYDG…DVGLQTTEAC (93 aa)). 4 residues coordinate [4Fe-4S] cluster: C417, C423, C463, and C467. C467 serves as a coordination point for siroheme.

This sequence belongs to the nitrite and sulfite reductase 4Fe-4S domain family. As to quaternary structure, monomer. It depends on siroheme as a cofactor. The cofactor is [4Fe-4S] cluster.

It catalyses the reaction hydrogen sulfide + 6 oxidized [2Fe-2S]-[ferredoxin] + 3 H2O = sulfite + 6 reduced [2Fe-2S]-[ferredoxin] + 7 H(+). Catalyzes the reduction of sulfite to sulfide, a step in the biosynthesis of sulfur-containing amino acids and cofactors. The protein is Sulfite reductase [ferredoxin] (sir) of Mycobacterium bovis (strain ATCC BAA-935 / AF2122/97).